The chain runs to 103 residues: Small ribosomal subunit protein bS6c (103 aa).

It belongs to the bacterial ribosomal protein bS6 family.

It is found in the plastid. The protein localises to the chloroplast. In terms of biological role, binds together with bS18 to 16S ribosomal RNA. The sequence is that of Small ribosomal subunit protein bS6c from Thalassiosira pseudonana (Marine diatom).